A 256-amino-acid polypeptide reads, in one-letter code: uncharacterized protein (256 aa).

Residues 187-223 (MEEEEISEVEDALNVLQRLCAQEEGDNKEAETNNNNY) are a coiled coil.

This is an uncharacterized protein from Ostreid herpesvirus 1 (isolate France) (OsHV-1).